We begin with the raw amino-acid sequence, 289 residues long: Secretory carrier-associated membrane protein (289 aa).

A disordered region spans residues 1-65 (MAGRYDPNPF…TSTDGKKKER (65 aa)). The Cytoplasmic portion of the chain corresponds to 1 to 123 (MAGRYDPNPF…EIPIHLRTLQ (123 aa)). The segment covering 16 to 31 (NPFSNPRSAASATNSR) has biased composition (polar residues). Residues 59–98 (DGKKKERDLQAKEAELRKREQEVRRKEEAIARAGIVIEEK) adopt a coiled-coil conformation. A run of 4 helical transmembrane segments spans residues 124-144 (YVAF…VVSV), 156-176 (IWFL…ALWY), 191-211 (FGWF…AAVA), and 239-259 (IFYF…IWVI). Residues 260–289 (QQVYMHFRGGGKTAEMKREAALGAMGAALR) are Cytoplasmic-facing.

It belongs to the SCAMP family.

It localises to the cell membrane. The protein localises to the cytoplasmic vesicle. The protein resides in the secretory vesicle membrane. Probably involved in membrane trafficking. The polypeptide is Secretory carrier-associated membrane protein (PSAM2) (Pisum sativum (Garden pea)).